The primary structure comprises 125 residues: Large ribosomal subunit protein bL12 (125 aa).

The protein belongs to the bacterial ribosomal protein bL12 family. In terms of assembly, homodimer. Part of the ribosomal stalk of the 50S ribosomal subunit. Forms a multimeric L10(L12)X complex, where L10 forms an elongated spine to which 2 to 4 L12 dimers bind in a sequential fashion. Binds GTP-bound translation factors.

Functionally, forms part of the ribosomal stalk which helps the ribosome interact with GTP-bound translation factors. Is thus essential for accurate translation. This Cereibacter sphaeroides (strain ATCC 17023 / DSM 158 / JCM 6121 / CCUG 31486 / LMG 2827 / NBRC 12203 / NCIMB 8253 / ATH 2.4.1.) (Rhodobacter sphaeroides) protein is Large ribosomal subunit protein bL12.